A 204-amino-acid polypeptide reads, in one-letter code: Ras-related and estrogen-regulated growth inhibitor-like protein (204 aa).

Positions 1-204 (MNDVKLTVLG…NVFGKRRKSV (204 aa)) are small GTPase-like. Residues 10–17 (GGEGTGKS), 57–63 (DPCSQPQ), and 122–125 (NKQD) each bind GTP.

Belongs to the small GTPase superfamily. Ras family.

The enzyme catalyses GTP + H2O = GDP + phosphate + H(+). Its function is as follows. Binds GDP/GTP and may possess intrinsic GTPase activity. The protein is Ras-related and estrogen-regulated growth inhibitor-like protein (RERGL) of Bos taurus (Bovine).